A 311-amino-acid chain; its full sequence is Methionyl-tRNA formyltransferase (311 aa).

109–112 (SLLP) is a binding site for (6S)-5,6,7,8-tetrahydrofolate.

This sequence belongs to the Fmt family.

The enzyme catalyses L-methionyl-tRNA(fMet) + (6R)-10-formyltetrahydrofolate = N-formyl-L-methionyl-tRNA(fMet) + (6S)-5,6,7,8-tetrahydrofolate + H(+). In terms of biological role, attaches a formyl group to the free amino group of methionyl-tRNA(fMet). The formyl group appears to play a dual role in the initiator identity of N-formylmethionyl-tRNA by promoting its recognition by IF2 and preventing the misappropriation of this tRNA by the elongation apparatus. This chain is Methionyl-tRNA formyltransferase, found in Staphylococcus aureus (strain USA300).